A 269-amino-acid chain; its full sequence is MAPLRILISNDDGVFADGIRALAGAAAAAGHQVTVVCPDRERSATGHGLTLQTPIRAEKADSLFDAGISAWACSGTPADCMKLALFELMDEAPDLVLSGINHGPNLGTDVFCSGTVAAAMEGTLEGLPSMAISSACFQWRDFQGAAALAVEVATAALRDQWPENLLLNLNIPPCRPEVMGPLRWTRLSIRRYDEQFSPRKDPRGRTYYWLAGEVVEDLESGGDGPRDWPTDVAQIEANSPSLTPIQPELFWRGPLGGLPRLELNGQRVR.

A divalent metal cation is bound by residues D11, D12, S43, and N101.

The protein belongs to the SurE nucleotidase family. A divalent metal cation serves as cofactor.

The protein resides in the cytoplasm. The enzyme catalyses a ribonucleoside 5'-phosphate + H2O = a ribonucleoside + phosphate. Nucleotidase that shows phosphatase activity on nucleoside 5'-monophosphates. This is 5'-nucleotidase SurE from Synechococcus sp. (strain WH7803).